A 199-amino-acid chain; its full sequence is NADH-quinone oxidoreductase subunit C (199 aa).

Belongs to the complex I 30 kDa subunit family. In terms of assembly, NDH-1 is composed of 14 different subunits. Subunits NuoB, C, D, E, F, and G constitute the peripheral sector of the complex.

Its subcellular location is the cell inner membrane. It catalyses the reaction a quinone + NADH + 5 H(+)(in) = a quinol + NAD(+) + 4 H(+)(out). In terms of biological role, NDH-1 shuttles electrons from NADH, via FMN and iron-sulfur (Fe-S) centers, to quinones in the respiratory chain. The immediate electron acceptor for the enzyme in this species is believed to be ubiquinone. Couples the redox reaction to proton translocation (for every two electrons transferred, four hydrogen ions are translocated across the cytoplasmic membrane), and thus conserves the redox energy in a proton gradient. The sequence is that of NADH-quinone oxidoreductase subunit C from Leptothrix cholodnii (strain ATCC 51168 / LMG 8142 / SP-6) (Leptothrix discophora (strain SP-6)).